Reading from the N-terminus, the 439-residue chain is Lipid-A-disaccharide synthase (439 aa).

Positions M1–L35 are disordered.

This sequence belongs to the LpxB family.

It carries out the reaction a lipid X + a UDP-2-N,3-O-bis[(3R)-3-hydroxyacyl]-alpha-D-glucosamine = a lipid A disaccharide + UDP + H(+). It participates in bacterial outer membrane biogenesis; LPS lipid A biosynthesis. Condensation of UDP-2,3-diacylglucosamine and 2,3-diacylglucosamine-1-phosphate to form lipid A disaccharide, a precursor of lipid A, a phosphorylated glycolipid that anchors the lipopolysaccharide to the outer membrane of the cell. The polypeptide is Lipid-A-disaccharide synthase (Xanthomonas euvesicatoria pv. vesicatoria (strain 85-10) (Xanthomonas campestris pv. vesicatoria)).